The chain runs to 104 residues: MGQAVKVLQLFKTLHRTRQQVFKNDARALEAARIKINEEFKKNKSETSPKKIEELMKIGSDVELLLRTSVIQGIHTDHNTLKLVPRKDLLVENVPYCDAPTQKQ.

Ser60 is subject to Phosphoserine.

Belongs to the complex I LYR family. In terms of assembly, interacts with UQCRFS1.

It localises to the mitochondrion matrix. Functionally, assembly factor required for Rieske Fe-S protein UQCRFS1 incorporation into the cytochrome b-c1 (CIII) complex. Functions as a chaperone, binding to this subunit within the mitochondrial matrix and stabilizing it prior to its translocation and insertion into the late CIII dimeric intermediate within the mitochondrial inner membrane. The protein is Complex III assembly factor LYRM7 (LYRM7) of Pongo abelii (Sumatran orangutan).